The primary structure comprises 2149 residues: Polyketide synthase 1 (2149 aa).

The tract at residues 19 to 261 is N-terminal acylcarrier protein transacylase domain (SAT); it reads FIFGDQSSCN…TRLAVHAPYH (243 aa). A Ketosynthase family 3 (KS3) domain is found at 394 to 829; sequence ESKIAIIGMS…GGNTALLVED (436 aa). Active-site for beta-ketoacyl synthase activity residues include Cys-566, His-701, and His-745. The segment at 929 to 1233 is malonyl-CoA:ACP transacylase (MAT) domain; it reads AFVFSGQGSQ…PSLMRNKDGW (305 aa). Ser-1018 functions as the For acyl/malonyl transferase activity in the catalytic mechanism. The segment at 1310 to 1624 is product template (PT) domain; it reads TASVHRIVHE…RKVLNTAMPP (315 aa). An N-terminal hotdog fold region spans residues 1314–1447; that stretch reads HRIVHESVDK…SSLHFERPKV (134 aa). Positions 1314 to 1619 constitute a PKS/mFAS DH domain; sequence HRIVHESVDK…FQGIPRKVLN (306 aa). Residue His-1346 is the Proton acceptor; for dehydratase activity of the active site. The interval 1474–1619 is C-terminal hotdog fold; sequence LNSRMSSGVI…FQGIPRKVLN (146 aa). Asp-1533 (proton donor; for dehydratase activity) is an active-site residue. A disordered region spans residues 1619 to 1657; the sequence is NTAMPPPKSQNEAPVRSAPAKPAAKPPKSASSEHSGHFA. Residues 1635 to 1650 show a composition bias toward low complexity; it reads SAPAKPAAKPPKSASS. The region spanning 1678–1752 is the Carrier 1 domain; it reads RNPMLAVFKI…DLATHLGLDT (75 aa). Position 1712 is an O-(pantetheine 4'-phosphoryl)serine (Ser-1712). Positions 1755–1790 are enriched in low complexity; it reads SDQSSGQSSSSGGLSPRSDSIGEITSSATTPPSLSP. Positions 1755 to 1796 are disordered; the sequence is SDQSSGQSSSSGGLSPRSDSIGEITSSATTPPSLSPRGSVSG. The 78-residue stretch at 1793–1870 folds into the Carrier 2 domain; it reads SVSGSQCKDV…SFKHMFQQGH (78 aa). The residue at position 1830 (Ser-1830) is an O-(pantetheine 4'-phosphoryl)serine. Residues 1882 to 2147 form a thioesterase (TE) domain region; it reads LKQYRATSTL…ERVAAFIRST (266 aa). Residue Ser-1973 is the For thioesterase activity of the active site.

Functionally, polyketide synthase; part of the Pks1 gene cluster that mediates the biosynthesis of an anthraquinone derivative pigment that contributes to conidial pigmentation that provides protection from UV radiation, heat and cold stress. The polyketide synthase Pks1 produces 1-acetyl-2,4,6,8-tetrahydroxy-9,10-anthraquinone though condensation of acetyl-CoA with malonyl-CoA. The dehydratase EthD and the laccase Mlac1 further convert the anthraquinone derivative into the final conidial pigment. The polypeptide is Polyketide synthase 1 (Metarhizium majus (strain ARSEF 297)).